Here is a 364-residue protein sequence, read N- to C-terminus: Alanine racemase (364 aa).

Residue Lys35 is the Proton acceptor; specific for D-alanine of the active site. Lys35 bears the N6-(pyridoxal phosphate)lysine mark. Arg131 contributes to the substrate binding site. Tyr256 serves as the catalytic Proton acceptor; specific for L-alanine. Met304 lines the substrate pocket.

It belongs to the alanine racemase family. Pyridoxal 5'-phosphate is required as a cofactor.

It carries out the reaction L-alanine = D-alanine. Its pathway is amino-acid biosynthesis; D-alanine biosynthesis; D-alanine from L-alanine: step 1/1. Catalyzes the interconversion of L-alanine and D-alanine. May also act on other amino acids. This chain is Alanine racemase (alr), found in Chromohalobacter salexigens (strain ATCC BAA-138 / DSM 3043 / CIP 106854 / NCIMB 13768 / 1H11).